The primary structure comprises 704 residues: CAP-Gly domain-containing linker protein 4 (704 aa).

3 ANK repeats span residues 65–101 (TSVS…NVND), 149–180 (TNMN…DVDA), and 186–215 (NFGT…NPAF). One can recognise a CAP-Gly 1 domain in the interval 303 to 345 (GTTEFASGQWAGIELDEPEGKNNGSVGRVQYFKCAPKYGIFAP). The interval 353-479 (KDGRKTTTHT…SATSAANNSH (127 aa)) is disordered. Low complexity-rich tracts occupy residues 360–371 (THTPSTRATPHA), 423–432 (SMSSSSSSSS), and 440–461 (PKKL…SLPS). Residues 504-546 (GTTNFAPGYWYGIELEKPHGKNDGSVGGVQYFSCSPRYGIFAP) form the CAP-Gly 2 domain. Residues serine 556 and serine 608 each carry the phosphoserine modification. The 43-residue stretch at 643–685 (GPTDFASGIWLGLELRSAKGKNDGAVGDKRYFTCKPNYGVLVR) folds into the CAP-Gly 3 domain.

This is CAP-Gly domain-containing linker protein 4 (Clip4) from Mus musculus (Mouse).